Here is a 137-residue protein sequence, read N- to C-terminus: Nucleoside diphosphate kinase (137 aa).

ATP is bound by residues Lys-9, Phe-58, Arg-86, Thr-92, Arg-103, and Asn-113. Residue His-121 is the Pros-phosphohistidine intermediate of the active site.

The protein belongs to the NDK family. As to quaternary structure, homotetramer. Mg(2+) serves as cofactor.

Its subcellular location is the cytoplasm. It catalyses the reaction a 2'-deoxyribonucleoside 5'-diphosphate + ATP = a 2'-deoxyribonucleoside 5'-triphosphate + ADP. The catalysed reaction is a ribonucleoside 5'-diphosphate + ATP = a ribonucleoside 5'-triphosphate + ADP. In terms of biological role, major role in the synthesis of nucleoside triphosphates other than ATP. The ATP gamma phosphate is transferred to the NDP beta phosphate via a ping-pong mechanism, using a phosphorylated active-site intermediate. This Streptococcus pneumoniae (strain P1031) protein is Nucleoside diphosphate kinase.